The sequence spans 315 residues: MLSVNELALEIFENLAEFAEEFNAAYHELGNGARIVDCGVSTRGGYSAGRAFTEICMGGLGEVNFRMGEISGIPMPFIDVNTDFPSISCLGAQKAGWTVKVGNYFAMGSGPARALALKPKHTYEVIGYEDDFDSAVIALESDHLPNGEVMEKIAAECHVDVGNVCAVVAPTASPVGSIQVSGRCVETAIYKLNELGFDTTKIISAIGSAPIPPVKKDATRAMGCTNDATIYHGRILLTMKAPEIKDYLDKIPSNKSKGYGKPFYDIFKEAEFDFYKIDTSLFSPAEVIINELTEGVVYHVGAVNPEVTLKSFGLL.

It belongs to the MCH family.

It is found in the cytoplasm. The catalysed reaction is 5,10-methenyl-5,6,7,8-tetrahydromethanopterin + H2O = N(5)-formyl-5,6,7,8-tetrahydromethanopterin + H(+). The protein operates within one-carbon metabolism; methanogenesis from CO(2); 5,10-methenyl-5,6,7,8-tetrahydromethanopterin from CO(2): step 3/3. Its function is as follows. Catalyzes the reversible interconversion of 5-formyl-H(4)MPT to methenyl-H(4)MPT(+). This is Methenyltetrahydromethanopterin cyclohydrolase from Methanosphaerula palustris (strain ATCC BAA-1556 / DSM 19958 / E1-9c).